The primary structure comprises 45 residues: Gene 78 protein (45 aa).

Basic and acidic residues predominate over residues Met-1 to Leu-14. A disordered region spans residues Met-1–Tyr-45. The segment covering His-23–Lys-35 has biased composition (basic residues).

This is Gene 78 protein (78) from Mycobacterium phage L5 (Mycobacteriophage L5).